Consider the following 244-residue polypeptide: Thiol S-methyltransferase TMT1B (244 aa).

An N-terminal signal peptide occupies residues 1-23 (MDILVPLLQLLVLLLTLPLHLMA).

The protein belongs to the methyltransferase superfamily. In terms of tissue distribution, expressed in the liver.

It is found in the endoplasmic reticulum membrane. The protein resides in the lipid droplet. The protein localises to the microsome. Its subcellular location is the cytoplasm. It localises to the cytosol. The enzyme catalyses a thiol + S-adenosyl-L-methionine = a methyl thioether + S-adenosyl-L-homocysteine + H(+). Thiol S-methyltransferase that catalyzes the transfer of a methyl group from S-adenosyl-L-methionine to alkyl and phenolic thiol-containing acceptor substrates. Together with TMT1B accounts for most of S-thiol methylation activity in the endoplasmic reticulum of hepatocytes. Selectively methylates S-centered nucleophiles from metabolites such as hydrogen sulfide and dithiothreitol. The chain is Thiol S-methyltransferase TMT1B from Homo sapiens (Human).